A 31-amino-acid polypeptide reads, in one-letter code: Maltose/maltodextrin import ATP-binding protein MalK (31 aa).

It belongs to the ABC transporter superfamily. Maltooligosaccharide importer (TC 3.A.1.1.1) family. In terms of assembly, the complex is composed of two ATP-binding proteins (MalK), two transmembrane proteins (MalG and MalK) and a solute-binding protein (MalE).

The protein resides in the cell inner membrane. The catalysed reaction is D-maltose(out) + ATP + H2O = D-maltose(in) + ADP + phosphate + H(+). Part of the ABC transporter complex MalEFGK involved in maltose/maltodextrin import. Responsible for energy coupling to the transport system. The polypeptide is Maltose/maltodextrin import ATP-binding protein MalK (Photorhabdus luminescens (Xenorhabdus luminescens)).